Consider the following 417-residue polypeptide: RH-like protein ID (417 aa).

11 helical membrane passes run 12–32 (CLPL…YFFT), 44–64 (LVAS…GFGF), 77–97 (VAFN…LDGF), 125–145 (ISAG…MVLV), 172–192 (IYVF…KPLA), 203–223 (TIPS…WPSF), 238–258 (VFNT…VSSL), 265–285 (INMT…ATSC), 287–307 (LIPS…ISIG), 331–351 (NFSL…VLDT), and 358–378 (MVGF…VIAL).

It belongs to the ammonium transporter (TC 2.A.49) family. Rh subfamily.

It localises to the membrane. Functionally, may be part of an oligomeric complex which is likely to have a transport or channel function in the erythrocyte membrane. The polypeptide is RH-like protein ID (Gorilla gorilla gorilla (Western lowland gorilla)).